The sequence spans 92 residues: Small ribosomal subunit protein uS19 (92 aa).

It belongs to the universal ribosomal protein uS19 family.

Its function is as follows. Protein S19 forms a complex with S13 that binds strongly to the 16S ribosomal RNA. The protein is Small ribosomal subunit protein uS19 of Vibrio atlanticus (strain LGP32) (Vibrio splendidus (strain Mel32)).